The sequence spans 462 residues: NEDD8-activating enzyme E1 regulatory subunit (462 aa).

The protein belongs to the ubiquitin-activating E1 family. ULA1 subfamily. As to quaternary structure, heterodimer of UBA3 and ULA1. The complex binds NEDD8 and UBC12.

It functions in the pathway protein modification; protein neddylation. Regulatory subunit of the dimeric UBA3-ULA1 E1 enzyme. E1 activates NEDD8/RUB1 by first adenylating its C-terminal glycine residue with ATP, thereafter linking this residue to the side chain of the catalytic cysteine, yielding a NEDD8-UBA3 thioester and free AMP. E1 finally transfers NEDD8 to the catalytic cysteine of UBC12. The protein is NEDD8-activating enzyme E1 regulatory subunit (ULA1) of Saccharomyces cerevisiae (strain ATCC 204508 / S288c) (Baker's yeast).